The sequence spans 344 residues: Follistatin (344 aa).

Residues 1 to 29 (MVRARHQPGGLCLLLLLLCQFMEDRSAQA) form the signal peptide. In terms of domain architecture, TB spans 30 to 103 (GNCWLRQAKN…TCENVDCGPG (74 aa)). 18 cysteine pairs are disulfide-bonded: cysteine 32-cysteine 55, cysteine 42-cysteine 88, cysteine 56-cysteine 91, cysteine 95-cysteine 106, cysteine 100-cysteine 116, cysteine 118-cysteine 150, cysteine 122-cysteine 143, cysteine 132-cysteine 164, cysteine 168-cysteine 179, cysteine 173-cysteine 189, cysteine 192-cysteine 225, cysteine 196-cysteine 218, cysteine 207-cysteine 239, cysteine 245-cysteine 256, cysteine 250-cysteine 267, cysteine 270-cysteine 302, cysteine 274-cysteine 295, and cysteine 284-cysteine 316. A Follistatin-like 1 domain is found at 94 to 117 (TCENVDCGPGKKCRMNKKNKPRCV). Residues 112-166 (NKPRCVCAPDCSNITWKGPVCGLDGKTYRNECALLKARCKEQPELEVQYQGRCKK) enclose the Kazal-like 1 domain. Asparagine 124 carries an N-linked (GlcNAc...) asparagine glycan. Positions 167-190 (TCRDVFCPGSSTCVVDQTNNAYCV) constitute a Follistatin-like 2 domain. The 56-residue stretch at 186–241 (NAYCVTCNRICPEPASSEQYLCGNDGVTYSSACHLRKATCLLGRSIGLAYEGKCIK) folds into the Kazal-like 2 domain. Residues 244–268 (SCEDIQCTGGKKCLWDFKVGRGRCS) enclose the Follistatin-like 3 domain. The region spanning 264 to 318 (RGRCSLCDELCPDSKSDEPVCASDNATYASECAMKEAACSSGVLLEVKHSGSCNS) is the Kazal-like 3 domain. Asparagine 288 is a glycosylation site (N-linked (GlcNAc...) asparagine). The segment at 314–344 (GSCNSISEDTEEEEEDEDQDYSFPISSILEW) is disordered. Residues 321–333 (EDTEEEEEDEDQD) are compositionally biased toward acidic residues.

As to quaternary structure, interacts with GDF11. Interacts with activin A/INHBA. Interacts with MYOSTATIN/MSTN. In terms of tissue distribution, isoform 1 is the predominant isoform in serum but is undetectable in follicular fluid. In the embryo, strong expression is seen in the palatal epithelia, including the medial edge epithelial and midline epithelial seam of the palatal shelves. Less pronounced expression is also seen throughout the palatal shelf and tongue mesenchyme.

The protein localises to the secreted. Its subcellular location is the nucleus. It localises to the nucleolus. Multifunctional regulatory protein whose primary function is to antagonize members of the transforming growth factor beta (TGF-beta) superfamily including activin, myostatin, GDF11 or bone morphogenetic proteins (BMPs). Mechanistically, binds to these ligands in the extracellular space, blocking their type II receptor-binding site to inhibit downstream signaling. Plays an essential role in muscle fiber formation and growth both by preventing the repressive effects of myostatin and through SMAD3/AKT/mTOR signaling independently of myostatin. Also promotes neural differentiation by antagonizing the action BMP4. Acts as a specific inhibitor of the biosynthesis and secretion of pituitary follicle stimulating hormone (FSH) by sequestering activin A/INHBA. On the other hand, translocates into the nucleus where it down-regulates rRNA synthesis and ribosome biogenesis to maintain cellular energy homeostasis by binding to rDNA. This chain is Follistatin, found in Homo sapiens (Human).